We begin with the raw amino-acid sequence, 384 residues long: Autophagy-related protein 30 (384 aa).

The disordered stretch occupies residues 1 to 63; that stretch reads MFSRKQVQKR…ASPGQLRPRT (63 aa). The span at 13 to 27 shows a compositional bias: low complexity; the sequence is ELSSLHCSNSSNSLN. Residues 45–63 are compositionally biased toward polar residues; it reads RGNNRSDNVASPGQLRPRT. Phosphoserine is present on S112. Positions 266-291 are disordered; the sequence is VKHDKPSSPLPNYHNTLKQAPSSNSQ. Positions 278 to 291 are enriched in polar residues; it reads YHNTLKQAPSSNSQ.

As to quaternary structure, interacts with ATG11, ATG17, ATG37, PEX3 and PEX14. In terms of processing, phosphorylation at Ser-112 is required for micro- and macropexophagy.

It is found in the vacuole lumen. The protein resides in the preautophagosomal structure. The protein localises to the peroxisome membrane. Acts as the peroxisome receptor for pexophagy. Required for both micropexophagy and macropexophagy, but not for the cytoplasm to vacuole transport (Cvt) or autophagy pathways. Required for functional micropexophagic apparatus (MIPA) and relocation of ATG11 to the peroxisome-sequestering arms of the vacuole. The polypeptide is Autophagy-related protein 30 (ATG30) (Komagataella phaffii (strain GS115 / ATCC 20864) (Yeast)).